We begin with the raw amino-acid sequence, 464 residues long: L-cystine uptake protein TcyP (464 aa).

10 consecutive transmembrane segments (helical) span residues 3-23 (TLLV…LYYM), 34-54 (VFTA…IYEP), 73-93 (YVKL…ISAF), 107-127 (GLII…GIAA), 184-204 (PTST…FIGV), 225-245 (IVMR…LALM), 263-283 (FVLA…LLIA), 347-367 (AGIY…IDPL), 371-391 (FILT…GVGG), and 395-415 (FAAL…ALVI).

Belongs to the dicarboxylate/amino acid:cation symporter (DAACS) (TC 2.A.23) family.

It localises to the membrane. Its function is as follows. Mediates uptake of L-cystine, the oxidized form of L-cysteine. The chain is L-cystine uptake protein TcyP from Bacillus cereus (strain ATCC 14579 / DSM 31 / CCUG 7414 / JCM 2152 / NBRC 15305 / NCIMB 9373 / NCTC 2599 / NRRL B-3711).